Reading from the N-terminus, the 910-residue chain is von Willebrand factor A domain-containing protein DDB_G0292740 (910 aa).

A VIT domain is found at 63–194; the sequence is AYQYYNVSSF…SITIHITMIS (132 aa). The interval 297 to 318 is disordered; it reads IKNNPHSDSDSDSDDEENKKEN. The VWFA domain occupies 346–515; that stretch reads EFIFLIDCSG…DMETEVMKLL (170 aa). Positions 703-719 are enriched in low complexity; that stretch reads QYQQQQQQQQQNFNSGF. The segment at 703-815 is disordered; that stretch reads QYQQQQQQQQ…TQSESTPSND (113 aa). Positions 720 to 749 are enriched in pro residues; it reads APPPPPMMSSGPPPPPGSSFGAPPPPPPGG. Low complexity predominate over residues 750-802; that stretch reads AFPTSSISEKKSSSQSSSSYLPPTMSLSRKSSLSPSSPSKNYPSPKLSSPSLS. Positions 803–815 are enriched in polar residues; the sequence is YGSTQSESTPSND.

The sequence is that of von Willebrand factor A domain-containing protein DDB_G0292740 from Dictyostelium discoideum (Social amoeba).